An 88-amino-acid polypeptide reads, in one-letter code: Small ribosomal subunit protein uS17 (88 aa).

Belongs to the universal ribosomal protein uS17 family. As to quaternary structure, part of the 30S ribosomal subunit.

In terms of biological role, one of the primary rRNA binding proteins, it binds specifically to the 5'-end of 16S ribosomal RNA. In Prochlorococcus marinus subsp. pastoris (strain CCMP1986 / NIES-2087 / MED4), this protein is Small ribosomal subunit protein uS17.